The primary structure comprises 479 residues: MSDVTIVKEGWVQKRGEYIKNWRPRYFLLKTDGSFIGYKEKPQDVDLPYPLNNFSVAKCQLMKTERPKPNTFIIRCLQWTTVIERTFHVDTPEEREEWTEAIQAVADRLQRQEEERMNCSPTSQIDNIGEEEMDASTTHHKRKTMNDFDYLKLLGKGTFGKVILVREKASGKYYAMKILKKEVIIAKDEVAHTLTESRVLKNTRHPFLTSLKYSFQTKDRLCFVMEYVNGGELFFHLSRERVFSEDRTRFYGAEIVSALDYLHSGKIVYRDLKLENLMLDKDGHIKITDFGLCKEGITDAATMKTFCGTPEYLAPEVLEDNDYGRAVDWWGLGVVMYEMMCGRLPFYNQDHEKLFELILMEDIKFPRTLSSDAKSLLSGLLIKDPNKRLGGGPDDAKEIMRHSFFSGVNWQDVYDKKLVPPFKPQVTSETDTRYFDEEFTAQTITITPPEKYDEDGMDCMDNERRPHFPQFSYSASGRE.

The residue at position 2 (serine 2) is an N-acetylserine. The region spanning 5–107 (TIVKEGWVQK…WTEAIQAVAD (103 aa)) is the PH domain. Cysteine 59 and cysteine 76 form a disulfide bridge. The region spanning 148–405 (FDYLKLLGKG…AKEIMRHSFF (258 aa)) is the Protein kinase domain. ATP-binding positions include 154–162 (LGKGTFGKV) and lysine 177. Catalysis depends on aspartate 271, which acts as the Proton acceptor. Cysteine 293 and cysteine 307 are oxidised to a cystine. Threonine 302 is a glycosylation site (O-linked (GlcNAc) threonine). A Phosphothreonine; by PDPK1 modification is found at threonine 305. O-linked (GlcNAc) threonine glycosylation occurs at threonine 309. Residues 406 to 479 (SGVNWQDVYD…QFSYSASGRE (74 aa)) enclose the AGC-kinase C-terminal domain. A Phosphothreonine modification is found at threonine 447. The disordered stretch occupies residues 458-479 (DCMDNERRPHFPQFSYSASGRE). The residue at position 472 (serine 472) is a Phosphoserine; by PKC/PRKCZ. O-linked (GlcNAc) serine; alternate glycosylation occurs at serine 472.

It belongs to the protein kinase superfamily. AGC Ser/Thr protein kinase family. RAC subfamily. Interacts (via PH domain) with TCL1A; this enhances AKT3 phosphorylation and activation. Interacts with TRAF6. Interacts with KCTD20. Interacts with BTBD10. Phosphorylation on Thr-305 and Ser-472 is required for full activity. Phosphorylation of the activation loop at Thr-305 by PDPK1/PDK1 is a prerequisite for full activation. Phosphorylation at Ser-472 by mTORC2 in response to growth factors plays a key role in AKT1 activation by facilitating subsequent phosphorylation of the activation loop by PDPK1/PDK1. In terms of processing, ubiquitinated. When fully phosphorylated and translocated into the nucleus, undergoes 'Lys-48'-polyubiquitination catalyzed by TTC3, leading to its degradation by the proteasome. Post-translationally, O-GlcNAcylation at Thr-302 and Thr-309 inhibits activating phosphorylation at Thr-305 via disrupting the interaction between AKT and PDPK1/PDK1. In terms of tissue distribution, in adult tissues, it is highly expressed in brain, lung and kidney, but weakly in heart, testis and liver. In fetal tissues, it is highly expressed in heart, liver and brain and not at all in kidney.

It localises to the nucleus. The protein resides in the cytoplasm. The protein localises to the membrane. The enzyme catalyses L-seryl-[protein] + ATP = O-phospho-L-seryl-[protein] + ADP + H(+). It carries out the reaction L-threonyl-[protein] + ATP = O-phospho-L-threonyl-[protein] + ADP + H(+). Its activity is regulated as follows. Two specific sites, one in the kinase domain (Thr-305) and the other in the C-terminal regulatory region (Ser-472), need to be phosphorylated for its full activation. IGF-1 leads to the activation of AKT3, which may play a role in regulating cell survival. Functionally, AKT3 is one of 3 closely related serine/threonine-protein kinases (AKT1, AKT2 and AKT3) called the AKT kinase, and which regulate many processes including metabolism, proliferation, cell survival, growth and angiogenesis. This is mediated through serine and/or threonine phosphorylation of a range of downstream substrates. Over 100 substrate candidates have been reported so far, but for most of them, no isoform specificity has been reported. AKT3 is the least studied AKT isoform. It plays an important role in brain development and is crucial for the viability of malignant glioma cells. AKT3 isoform may also be the key molecule in up-regulation and down-regulation of MMP13 via IL13. Required for the coordination of mitochondrial biogenesis with growth factor-induced increases in cellular energy demands. Down-regulation by RNA interference reduces the expression of the phosphorylated form of BAD, resulting in the induction of caspase-dependent apoptosis. The protein is RAC-gamma serine/threonine-protein kinase (AKT3) of Homo sapiens (Human).